We begin with the raw amino-acid sequence, 431 residues long: Glutamate-1-semialdehyde 2,1-aminomutase (431 aa).

Position 265 is an N6-(pyridoxal phosphate)lysine (lysine 265).

The protein belongs to the class-III pyridoxal-phosphate-dependent aminotransferase family. HemL subfamily. Homodimer. It depends on pyridoxal 5'-phosphate as a cofactor.

The protein resides in the cytoplasm. The catalysed reaction is (S)-4-amino-5-oxopentanoate = 5-aminolevulinate. It functions in the pathway porphyrin-containing compound metabolism; protoporphyrin-IX biosynthesis; 5-aminolevulinate from L-glutamyl-tRNA(Glu): step 2/2. The chain is Glutamate-1-semialdehyde 2,1-aminomutase from Vibrio campbellii (strain ATCC BAA-1116).